The following is a 129-amino-acid chain: MAKKPSKKKVKRQVASGRAYIHASYNNTIVTITDPDGNPITWSSGGVIGYKGSRKGTPYAAQLAALDAAKKAMAYGMQSVDVIVRGTGAGREQAIRALQASGLQVKSIVDDTPVPHNGCRPKKKFRKAS.

A disordered region spans residues 109-129; sequence VDDTPVPHNGCRPKKKFRKAS. Over residues 119–129 the composition is skewed to basic residues; the sequence is CRPKKKFRKAS.

It belongs to the universal ribosomal protein uS11 family. As to quaternary structure, part of the 30S ribosomal subunit. Interacts with proteins S7 and S18. Binds to the C-terminus of IF-3; however exactly how IF-3 interacts with the 30S subunit is unclear.

Located on the upper part of the platform of the 30S subunit, where it bridges several disparate RNA helices of the 16S rRNA. Forms part of the Shine-Dalgarno cleft in the 70S ribosome. The sequence is that of Small ribosomal subunit protein uS11 (rpsK) from Thermus thermophilus (strain ATCC BAA-163 / DSM 7039 / HB27).